Reading from the N-terminus, the 412-residue chain is BSD domain-containing protein 1 (412 aa).

The region spanning 146 to 198 (WLAYWDPEHRKAEISELLVTSPSIRALYTKMVPAAVSHSEFWQRYFYKVHQLE) is the BSD domain. Composition is skewed to basic and acidic residues over residues 208-219 (KQRADQSVHSEE) and 255-271 (HVEDKSEKMAELNRDHT). 2 disordered regions span residues 208-228 (KQRADQSVHSEEPQWEEEEED) and 255-383 (HVED…EKDF). The span at 272 to 287 (SITSPSESSESISPIT) shows a compositional bias: low complexity. The segment covering 340-351 (THREDPPSDLRV) has biased composition (basic and acidic residues). Residues 355–374 (NSDSGKSTPSNNGQKGSSTD) show a composition bias toward polar residues.

The sequence is that of BSD domain-containing protein 1 (bsdc1) from Xenopus tropicalis (Western clawed frog).